We begin with the raw amino-acid sequence, 209 residues long: Fibroblast growth factor 21 (209 aa).

The N-terminal stretch at 1–28 (MDSDETGFEHSGLWVSVLAGLLLGACQA) is a signal peptide. A disordered region spans residues 143-209 (PLHLPGNKSP…SQGRSPSYAS (67 aa)). Residues 168 to 186 (PGLPPALPEPPGILAPQPP) are compositionally biased toward pro residues.

Belongs to the heparin-binding growth factors family. In terms of assembly, interacts (via C-terminus) with KLB; this interaction is direct. Interacts with FGFR4.

The protein localises to the secreted. Its function is as follows. Stimulates glucose uptake in differentiated adipocytes via the induction of glucose transporter SLC2A1/GLUT1 expression (but not SLC2A4/GLUT4 expression). Activity requires the presence of KLB. Regulates systemic glucose homeostasis and insulin sensitivity. The chain is Fibroblast growth factor 21 (FGF21) from Homo sapiens (Human).